The following is a 416-amino-acid chain: TNF receptor-associated factor 1 (416 aa).

Residues 1-24 (MASSSGSSPRPAPDENEFPFGCPP) are disordered. Serine 146 bears the Phosphoserine mark. Positions 182 to 264 (MKEKLLAELE…QSLRLMEEAS (83 aa)) form a coiled coil. Glycyl lysine isopeptide (Lys-Gly) (interchain with G-Cter in ubiquitin) cross-links involve residues lysine 185 and lysine 193. An MATH domain is found at 266-412 (DGTFLWKITN…DDTMFLKCIV (147 aa)).

As to quaternary structure, homotrimer. Heterotrimer with TRAF2. Interacts with TNFRSF1A/TNFR1, TNFRSF1B/TNFR2, TNFRSF4, TNFRSF5/CD40, TNFRSF8/CD30, TNFRSF9/CD137, TNFRSF11A/RANK, TNFRSF13C, TNFRSF18/AITR, TNFRSF17/BCMA, TNFRSF19/TROY, TNFRSF19L/RELT, XEDAR, EDAR, Epstein-Barr virus BNFL1/LMP-1, TANK/ITRAF, TRAIP and RIPK2. Interacts with BIRC2 and BIRC3 N-terminus; a single BIRC2 or BIRC3 molecule interacts with a heterotrimer formed by TRAF1 and TRAF2. Interacts with NFATC2IP, TRAFD1 and with HIVEP3. Interacts with MAP3K14. Interacts with GPS2. In terms of processing, polyubiquitinated by BIRC2 and/or BIRC3, leading to its subsequent proteasomal degradation. Ubiquitinated by the SCF(FBXL2) complex, leading to its degradation by the proteasome.

Adapter molecule that regulates the activation of NF-kappa-B and JNK. Plays a role in the regulation of cell survival and apoptosis. The heterotrimer formed by TRAF1 and TRAF2 is part of a E3 ubiquitin-protein ligase complex that promotes ubiquitination of target proteins, such as MAP3K14. The TRAF1/TRAF2 complex recruits the antiapoptotic E3 protein-ubiquitin ligases BIRC2 and BIRC3 to TNFRSF1B/TNFR2. This Homo sapiens (Human) protein is TNF receptor-associated factor 1 (TRAF1).